The sequence spans 107 residues: Nucleoid-associated protein Pnuc_0701 (107 aa).

The protein belongs to the YbaB/EbfC family. Homodimer.

It is found in the cytoplasm. It localises to the nucleoid. Binds to DNA and alters its conformation. May be involved in regulation of gene expression, nucleoid organization and DNA protection. This Polynucleobacter asymbioticus (strain DSM 18221 / CIP 109841 / QLW-P1DMWA-1) (Polynucleobacter necessarius subsp. asymbioticus) protein is Nucleoid-associated protein Pnuc_0701.